Reading from the N-terminus, the 298-residue chain is 4-hydroxy-tetrahydrodipicolinate synthase (298 aa).

Residue Thr-48 participates in pyruvate binding. Tyr-137 (proton donor/acceptor) is an active-site residue. Lys-166 serves as the catalytic Schiff-base intermediate with substrate. Ile-207 contacts pyruvate.

This sequence belongs to the DapA family. As to quaternary structure, homotetramer; dimer of dimers.

It localises to the cytoplasm. The catalysed reaction is L-aspartate 4-semialdehyde + pyruvate = (2S,4S)-4-hydroxy-2,3,4,5-tetrahydrodipicolinate + H2O + H(+). Its pathway is amino-acid biosynthesis; L-lysine biosynthesis via DAP pathway; (S)-tetrahydrodipicolinate from L-aspartate: step 3/4. Catalyzes the condensation of (S)-aspartate-beta-semialdehyde [(S)-ASA] and pyruvate to 4-hydroxy-tetrahydrodipicolinate (HTPA). The sequence is that of 4-hydroxy-tetrahydrodipicolinate synthase from Campylobacter jejuni subsp. jejuni serotype O:2 (strain ATCC 700819 / NCTC 11168).